A 384-amino-acid polypeptide reads, in one-letter code: Shufflon-specific DNA recombinase (384 aa).

The Core-binding (CB) domain occupies 9–96; that stretch reads MSLSRALDKY…LLSSLFNIAR (88 aa). In terms of domain architecture, Tyr recombinase spans 118–284; the sequence is GRDRRLTSSE…RAWQLVSKLD (167 aa). Catalysis depends on residues Arg155, Lys180, His235, Arg238, and His262. Tyr271 serves as the catalytic O-(3'-phospho-DNA)-tyrosine intermediate.

Belongs to the 'phage' integrase family.

In terms of biological role, shufflon-specific DNA recombinase. The protein is Shufflon-specific DNA recombinase (rci) of Escherichia coli.